Reading from the N-terminus, the 493-residue chain is Endothelial lipase (493 aa).

A signal peptide spans 1-23; that stretch reads MRDPVFLLGFWSLYCCFPAGSLT. A disulfide bridge links cysteine 66 with cysteine 79. N-linked (GlcNAc...) asparagine glycans are attached at residues asparagine 67 and asparagine 82. Catalysis depends on serine 171, which acts as the Nucleophile. The Charge relay system role is filled by aspartate 195. The cysteines at positions 254 and 274 are disulfide-linked. The active-site Charge relay system is histidine 276. 2 cysteine pairs are disulfide-bonded: cysteine 299–cysteine 318 and cysteine 310–cysteine 313. 327–339 is a heparin binding site; sequence KMRKKRNSKMYLK. A PLAT domain is found at 349-484; the sequence is YHYQLKVHMF…SPGQELWFYK (136 aa). Asparagine 395 carries N-linked (GlcNAc...) asparagine glycosylation. A disulfide bridge links cysteine 465 with cysteine 485.

This sequence belongs to the AB hydrolase superfamily. Lipase family. As to quaternary structure, head to tail Homodimer. Interacts with apolipoprotein C-2.

It localises to the secreted. The enzyme catalyses a triacylglycerol + H2O = a diacylglycerol + a fatty acid + H(+). The catalysed reaction is a 1,2-diacyl-sn-glycero-3-phosphocholine + H2O = a 2-acyl-sn-glycero-3-phosphocholine + a fatty acid + H(+). It catalyses the reaction 1,2,3-tri-(9Z-octadecenoyl)-glycerol + H2O = di-(9Z)-octadecenoylglycerol + (9Z)-octadecenoate + H(+). It carries out the reaction 1,2,3-tributanoylglycerol + H2O = dibutanoylglycerol + butanoate + H(+). The enzyme catalyses 1,2-dihexadecanoyl-sn-glycero-3-phosphocholine + H2O = hexadecanoyl-sn-glycero-3-phosphocholine + hexadecanoate + H(+). In terms of biological role, exerts both phospholipase and triglyceride lipase activities. More active as a phospholipase than a triglyceride lipase. Hydrolyzes triglycerides, both with short-chain fatty acyl groups (tributyrin) and long-chain fatty acyl groups (triolein) with similar levels of activity toward both types of substrates. Hydrolyzes high density lipoproteins (HDL) more efficiently than other lipoproteins. The sequence is that of Endothelial lipase (Lipg) from Rattus norvegicus (Rat).